A 317-amino-acid polypeptide reads, in one-letter code: Protoheme IX farnesyltransferase (317 aa).

7 consecutive transmembrane segments (helical) span residues 33–53 (VMSL…GEIN), 54–74 (PILG…SGAL), 117–137 (VILG…TIFF), 154–174 (IVIG…CVTG), 181–201 (VILF…LALF), 242–262 (FFTG…SAIF), and 285–305 (MFAY…ADHF).

It belongs to the UbiA prenyltransferase family. Protoheme IX farnesyltransferase subfamily.

The protein localises to the cell inner membrane. The catalysed reaction is heme b + (2E,6E)-farnesyl diphosphate + H2O = Fe(II)-heme o + diphosphate. The protein operates within porphyrin-containing compound metabolism; heme O biosynthesis; heme O from protoheme: step 1/1. In terms of biological role, converts heme B (protoheme IX) to heme O by substitution of the vinyl group on carbon 2 of heme B porphyrin ring with a hydroxyethyl farnesyl side group. The protein is Protoheme IX farnesyltransferase of Agrobacterium fabrum (strain C58 / ATCC 33970) (Agrobacterium tumefaciens (strain C58)).